The chain runs to 102 residues: MNQYDLNLILNPNLSAEQLQIEKDYIETTLRNNGAEVTKLDDVGNRRMAYPIAKDREGYYLMYTIRAGGNPEKDIASTLRLRDNVRRVLVVKDRPEWKTKKA.

Belongs to the bacterial ribosomal protein bS6 family.

In terms of biological role, binds together with bS18 to 16S ribosomal RNA. This Deinococcus geothermalis (strain DSM 11300 / CIP 105573 / AG-3a) protein is Small ribosomal subunit protein bS6.